Reading from the N-terminus, the 239-residue chain is 7-cyano-7-deazaguanine synthase (239 aa).

13-23 is a binding site for ATP; it reads LSGGLDSMVTA. Positions 193, 203, 206, and 209 each coordinate Zn(2+).

It belongs to the QueC family. The cofactor is Zn(2+).

The enzyme catalyses 7-carboxy-7-deazaguanine + NH4(+) + ATP = 7-cyano-7-deazaguanine + ADP + phosphate + H2O + H(+). Its pathway is purine metabolism; 7-cyano-7-deazaguanine biosynthesis. In terms of biological role, catalyzes the ATP-dependent conversion of 7-carboxy-7-deazaguanine (CDG) to 7-cyano-7-deazaguanine (preQ(0)). The polypeptide is 7-cyano-7-deazaguanine synthase (Erythrobacter litoralis (strain HTCC2594)).